The chain runs to 340 residues: Annexin A2-A (340 aa).

Residues Ala-2–Leu-25 form a P10 binding site region. Annexin repeat units follow at residues Phe-34 to Lys-105, Thr-106 to Lys-177, Glu-190 to Gln-262, and Asn-266 to Gly-337.

Belongs to the annexin family. In terms of assembly, tetramer of 2 light chains (p10 proteins) and 2 heavy chains (p36 proteins).

The protein resides in the secreted. The protein localises to the extracellular space. Its subcellular location is the extracellular matrix. It is found in the basement membrane. Calcium-regulated membrane-binding protein whose affinity for calcium is greatly enhanced by anionic phospholipids. It binds two calcium ions with high affinity. This chain is Annexin A2-A (anxa2-a), found in Xenopus laevis (African clawed frog).